The sequence spans 88 residues: Small ribosomal subunit protein uS15 (88 aa).

It belongs to the universal ribosomal protein uS15 family. As to quaternary structure, part of the 30S ribosomal subunit. Forms a bridge to the 50S subunit in the 70S ribosome, contacting the 23S rRNA.

In terms of biological role, one of the primary rRNA binding proteins, it binds directly to 16S rRNA where it helps nucleate assembly of the platform of the 30S subunit by binding and bridging several RNA helices of the 16S rRNA. Forms an intersubunit bridge (bridge B4) with the 23S rRNA of the 50S subunit in the ribosome. In Leptospira interrogans serogroup Icterohaemorrhagiae serovar copenhageni (strain Fiocruz L1-130), this protein is Small ribosomal subunit protein uS15.